The primary structure comprises 79 residues: uncharacterized protein (79 aa).

This is an uncharacterized protein from Streptomyces lividans.